Reading from the N-terminus, the 567-residue chain is Potassium-transporting ATPase potassium-binding subunit (567 aa).

11 helical membrane passes run 5-25 (GWIQILVFCGIIILLVKPLGG), 64-84 (TTYAASLLLFNLAGFLLLYML), 136-156 (GLTVQNFVSAATGVAIAIALI), 179-199 (LYVLLPLCIILTLAFVSLGVP), 254-274 (ISNMIQMVAIFAIGASLTNVF), 285-305 (WAIFAAMGILFVAGVAICYWA), 332-352 (IAMSALFAVVTTAASCGAVIA), 359-376 (ALGGMIPMINMMLGEIII), 421-441 (MLAVLCLPLSILGFTAIASVI), 486-506 (ITIGLAMLMGRFLVILPAMAI), and 529-549 (LFVGLLIGVILVVGGLIFFPA).

The protein belongs to the KdpA family. As to quaternary structure, the system is composed of three essential subunits: KdpA, KdpB and KdpC.

It is found in the cell inner membrane. Its function is as follows. Part of the high-affinity ATP-driven potassium transport (or Kdp) system, which catalyzes the hydrolysis of ATP coupled with the electrogenic transport of potassium into the cytoplasm. This subunit binds the periplasmic potassium ions and delivers the ions to the membrane domain of KdpB through an intramembrane tunnel. The sequence is that of Potassium-transporting ATPase potassium-binding subunit from Brucella anthropi (strain ATCC 49188 / DSM 6882 / CCUG 24695 / JCM 21032 / LMG 3331 / NBRC 15819 / NCTC 12168 / Alc 37) (Ochrobactrum anthropi).